Consider the following 132-residue polypeptide: Interleukin-13 (132 aa).

A signal peptide spans 1 to 18; sequence MALLLTTVIALTCLGGFA. N-linked (GlcNAc...) asparagine glycans are attached at residues Asn-38, Asn-49, Asn-57, and Asn-72. 2 disulfides stabilise this stretch: Cys-48–Cys-76 and Cys-64–Cys-90.

It belongs to the IL-4/IL-13 family. Interacts with IL13RA2.

The protein resides in the secreted. Its function is as follows. Cytokine that plays important roles in allergic inflammation and immune response to parasite infection. Synergizes with IL2 in regulating interferon-gamma synthesis. Stimulates B-cell proliferation, and activation of eosinophils, basophils, and mast cells. Plays an important role in controlling IL33 activity by modulating the production of transmembrane and soluble forms of interleukin-1 receptor-like 1/IL1RL1. Displays the capacity to antagonize Th1-driven proinflammatory immune response and downregulates synthesis of many proinflammatory cytokines including IL1, IL6, IL10, IL12 and TNF-alpha through a mechanism that partially involves suppression of NF-kappa-B. Also functions on nonhematopoietic cells, including endothelial cells where it induces vascular cell adhesion protein 1/VCAM1, which is important in the recruitment of eosinophils. Exerts its biological effects through its receptors which comprises the IL4R chain and the IL13RA1 chain, to activate JAK1 and TYK2, leading to the activation of STAT6. Aside from IL13RA1, another receptor IL13RA2 acts as a high affinity decoy for IL13 and mediates internalization and depletion of extracellular IL13. The chain is Interleukin-13 (IL13) from Pan troglodytes (Chimpanzee).